Here is a 303-residue protein sequence, read N- to C-terminus: Aquaporin NIP1-2 (303 aa).

The segment at 1-39 (MAGREDGAAAGAMEEGQDSKEVKCESSEDGSSSSSSSRC) is disordered. Residues 17–26 (QDSKEVKCES) are compositionally biased toward basic and acidic residues. A run of 2 helical transmembrane segments spans residues 66–86 (ILAEILGTYFMIFAGCGAVVV) and 91–111 (GGAVTFPGICAVWGLVVMVLV). An NPA 1 motif is present at residues 123–125 (NPA). 3 helical membrane-spanning segments follow: residues 145–165 (VVAQVLGSTMASLTLRVVFGG), 188–208 (AAALEFVISFFLMFVVSGVAT), and 212–232 (AIGELAGLAVGATVAVNVLFA). The NPA 2 motif lies at 241 to 243 (NPA). The helical transmembrane segment at 255-275 (YGGVWVYVAAPVSGTVCGAWA) threads the bilayer.

It belongs to the MIP/aquaporin (TC 1.A.8) family. NIP (TC 1.A.8.12) subfamily. In terms of tissue distribution, expressed in roots and leaves, and at lower levels in anthers.

The protein localises to the membrane. In terms of biological role, aquaporins facilitate the transport of water and small neutral solutes across cell membranes. In Oryza sativa subsp. japonica (Rice), this protein is Aquaporin NIP1-2 (NIP1-2).